The following is a 1115-amino-acid chain: Phytochrome E (1115 aa).

In terms of domain architecture, GAF spans D213–L383. C318 is a phytochromobilin binding site. Positions M598–E669 constitute a PAS 1 domain. Residues R672–R728 enclose the PAC domain. Positions D732–L803 constitute a PAS 2 domain. One can recognise a Histidine kinase domain in the interval Y880 to T1100.

Belongs to the phytochrome family. Homodimer. Post-translationally, contains one covalently linked phytochromobilin chromophore.

Regulatory photoreceptor which exists in two forms that are reversibly interconvertible by light: the Pr form that absorbs maximally in the red region of the spectrum and the Pfr form that absorbs maximally in the far-red region. Photoconversion of Pr to Pfr induces an array of morphogenic responses, whereas reconversion of Pfr to Pr cancels the induction of those responses. Pfr controls the expression of a number of nuclear genes including those encoding the small subunit of ribulose-bisphosphate carboxylase, chlorophyll A/B binding protein, protochlorophyllide reductase, rRNA, etc. It also controls the expression of its own gene(s) in a negative feedback fashion. In Ipomoea nil (Japanese morning glory), this protein is Phytochrome E (PHYE).